Consider the following 297-residue polypeptide: N-acetylmuramic acid 6-phosphate etherase (297 aa).

An SIS domain is found at 55–218 (AAAALKAGGR…STGAMVKLGK (164 aa)). Glutamate 83 (proton donor) is an active-site residue. Glutamate 114 is a catalytic residue.

The protein belongs to the GCKR-like family. MurNAc-6-P etherase subfamily. Homodimer.

It carries out the reaction N-acetyl-D-muramate 6-phosphate + H2O = N-acetyl-D-glucosamine 6-phosphate + (R)-lactate. It functions in the pathway amino-sugar metabolism; 1,6-anhydro-N-acetylmuramate degradation. It participates in amino-sugar metabolism; N-acetylmuramate degradation. Its pathway is cell wall biogenesis; peptidoglycan recycling. In terms of biological role, specifically catalyzes the cleavage of the D-lactyl ether substituent of MurNAc 6-phosphate, producing GlcNAc 6-phosphate and D-lactate. Together with AnmK, is also required for the utilization of anhydro-N-acetylmuramic acid (anhMurNAc) either imported from the medium or derived from its own cell wall murein, and thus plays a role in cell wall recycling. The protein is N-acetylmuramic acid 6-phosphate etherase of Serratia proteamaculans (strain 568).